Consider the following 271-residue polypeptide: Co-chaperone protein DjlA (271 aa).

Residues 1-6 (MQYWGK) are Periplasmic-facing. A helical transmembrane segment spans residues 7-31 (IIGVAVALIMGGGFWGVVLGLLIGH). The Cytoplasmic portion of the chain corresponds to 32–271 (MFDKARSRKM…ELIKQQKGFK (240 aa)). Positions 205 to 271 (DACNVLGVKP…ELIKQQKGFK (67 aa)) constitute a J domain.

Homodimer.

Its subcellular location is the cell inner membrane. In terms of biological role, regulatory DnaK co-chaperone. Direct interaction between DnaK and DjlA is needed for the induction of the wcaABCDE operon, involved in the synthesis of a colanic acid polysaccharide capsule, possibly through activation of the RcsB/RcsC phosphotransfer signaling pathway. The colanic acid capsule may help the bacterium survive conditions outside the host. This is Co-chaperone protein DjlA from Escherichia coli O6:H1 (strain CFT073 / ATCC 700928 / UPEC).